Consider the following 426-residue polypeptide: MSVSLSAASHLLCSSTRVSLSPAVTSSSSSPVVALSSSTSPHSLGSVASSSLFPHSSFVLQKKHPINGTSTRMISPKCAASDAAQLISAKEDIKVLLRTKFCHPILVRLGWHDAGTYNKNIEEWPLRGGANGSLRFEAELKHAANAGLLNALKLIQPLKDKYPNISYADLFQLASATAIEEAGGPDIPMKYGRVDVVAPEQCPEEGRLPDAGPPSPADHLRDVFYRMGLDDKEIVALSGAHTLGRARPDRSGWGKPETKYTKTGPGEAGGQSWTVKWLKFDNSYFKDIKEKRDDDLLVLPTDAALFEDPSFKNYAEKYAEDVAAFFKDYAEAHAKLSNLGAKFDPPEGIVIENVPEKFVAAKYSTGKKELSDSMKKKIRAEYEAIGGSPDKPLPTNYFLNIIIAIGVLVLLSTLFGGNNNSDFSGF.

Histidine 112 (proton acceptor) is an active-site residue. Histidine 241 lines the heme b pocket. Threonine 242 lines the K(+) pocket. Residues 245–269 are disordered; sequence RARPDRSGWGKPETKYTKTGPGEAG. A compositionally biased stretch (basic and acidic residues) spans 246–260; it reads ARPDRSGWGKPETKY. 2 residues coordinate K(+): threonine 274 and aspartate 281. Residues 397–417 traverse the membrane as a helical segment; sequence YFLNIIIAIGVLVLLSTLFGG.

Belongs to the peroxidase family. Ascorbate peroxidase subfamily. Requires heme b as cofactor.

Its subcellular location is the plastid. The protein resides in the chloroplast thylakoid membrane. It catalyses the reaction L-ascorbate + H2O2 = L-dehydroascorbate + 2 H2O. Functionally, plays a key role in hydrogen peroxide removal. This chain is L-ascorbate peroxidase T, chloroplastic (APXT), found in Arabidopsis thaliana (Mouse-ear cress).